A 1546-amino-acid polypeptide reads, in one-letter code: Lysophospholipase NTE1 (1546 aa).

Topologically, residues 1-45 are cytoplasmic; it reads MKDSTEALNSIAFAVDTTLSSILPSSLAPPSAPPATSSFLKSIWY. Residues 46–66 traverse the membrane as a helical segment; sequence AFWWLWSMVVFKIMNIILLYI. The Lumenal portion of the chain corresponds to 67–81; sequence PSKIMNALSINFEIT. The chain crosses the membrane as a helical span at residues 82 to 102; the sequence is LNLSSILVALSAIITVCFLVV. At 103-1546 the chain is on the cytoplasmic side; it reads RYKYLTGYSK…KKVLYRRNSI (1444 aa). Residues 689–820 and 816–965 each bind a nucleoside 3',5'-cyclic phosphate; these read PTEF…LKKL and KLKK…VASK. The PNPLA domain occupies 1239 to 1403; it reads LVLGGGGSRG…LDNLPVSEMK (165 aa). A GXGXXG motif is present at residues 1243–1248; that stretch reads GGGSRG. The GXSXG motif lies at 1270 to 1274; the sequence is GTSIG. Ser-1272 (nucleophile) is an active-site residue. Asp-1390 functions as the Proton acceptor in the catalytic mechanism. A DGA/G motif is present at residues 1390–1392; sequence DGG.

The protein belongs to the NTE family.

It localises to the endoplasmic reticulum membrane. It catalyses the reaction a 1-acyl-sn-glycero-3-phosphocholine + H2O = sn-glycerol 3-phosphocholine + a fatty acid + H(+). With respect to regulation, inhibited by organophosphorus esters. Functionally, intracellular phospholipase B that catalyzes the double deacylation of phosphatidylcholine (PC) to glycerophosphocholine (GroPCho). Plays an important role in membrane lipid homeostasis. Responsible for the rapid PC turnover in response to inositol, elevated temperatures, or when choline is present in the growth medium. The sequence is that of Lysophospholipase NTE1 (NTE1) from Scheffersomyces stipitis (strain ATCC 58785 / CBS 6054 / NBRC 10063 / NRRL Y-11545) (Yeast).